A 186-amino-acid polypeptide reads, in one-letter code: Negative modulator of initiation of replication (186 aa).

It belongs to the SeqA family. In terms of assembly, homodimer. Polymerizes to form helical filaments.

It is found in the cytoplasm. Functionally, negative regulator of replication initiation, which contributes to regulation of DNA replication and ensures that replication initiation occurs exactly once per chromosome per cell cycle. Binds to pairs of hemimethylated GATC sequences in the oriC region, thus preventing assembly of replication proteins and re-initiation at newly replicated origins. Repression is relieved when the region becomes fully methylated. The sequence is that of Negative modulator of initiation of replication from Glaesserella parasuis serovar 5 (strain SH0165) (Haemophilus parasuis).